Consider the following 287-residue polypeptide: 4-hydroxybenzoate octaprenyltransferase (287 aa).

8 helical membrane passes run 19 to 39, 42 to 62, 95 to 115, 136 to 156, 166 to 186, 210 to 230, 233 to 253, and 264 to 284; these read IGSLLLLWPTLWALFLAADGL, WHVLIVFVLGVVFMRSAGCVI, FFAVLVVCSFLLVLTMNTLTI, YLPQFVLGLAFSWAIPMAYAA, WLLFVINALWTIAYDTQYAMV, IIGLLQLSVLALLIVLGSQLA, GIYYWGILAAAGFFVYQQWLI, and AFLNNNYVGGLIFIAISASVL.

The protein belongs to the UbiA prenyltransferase family. The cofactor is Mg(2+).

It is found in the cell inner membrane. It catalyses the reaction all-trans-octaprenyl diphosphate + 4-hydroxybenzoate = 4-hydroxy-3-(all-trans-octaprenyl)benzoate + diphosphate. It functions in the pathway cofactor biosynthesis; ubiquinone biosynthesis. Catalyzes the prenylation of para-hydroxybenzoate (PHB) with an all-trans polyprenyl group. Mediates the second step in the final reaction sequence of ubiquinone-8 (UQ-8) biosynthesis, which is the condensation of the polyisoprenoid side chain with PHB, generating the first membrane-bound Q intermediate 3-octaprenyl-4-hydroxybenzoate. The sequence is that of 4-hydroxybenzoate octaprenyltransferase from Aliivibrio fischeri (strain MJ11) (Vibrio fischeri).